A 403-amino-acid chain; its full sequence is uncharacterized protein (403 aa).

This is an uncharacterized protein from Aquifex aeolicus (strain VF5).